Here is a 71-residue protein sequence, read N- to C-terminus: DNA-directed RNA polymerase subunit epsilon (71 aa).

The protein belongs to the RNA polymerase subunit epsilon family. RNAP is composed of a core of 2 alpha, a beta and a beta' subunit. The core is associated with a delta subunit, and at least one of epsilon or omega. When a sigma factor is associated with the core the holoenzyme is formed, which can initiate transcription.

The enzyme catalyses RNA(n) + a ribonucleoside 5'-triphosphate = RNA(n+1) + diphosphate. Its function is as follows. A non-essential component of RNA polymerase (RNAP). This Staphylococcus carnosus (strain TM300) protein is DNA-directed RNA polymerase subunit epsilon.